Reading from the N-terminus, the 234-residue chain is N-acetyl-alpha-D-glucosaminyl L-malate deacetylase 1 (234 aa).

Residues histidine 12, aspartate 15, and histidine 113 each coordinate Zn(2+).

This sequence belongs to the PIGL family. The cofactor is Zn(2+).

It catalyses the reaction (S)-malyl N-acetyl-alpha-D-glucosaminide + H2O = (S)-malyl alpha-D-glucosaminide + acetate. With respect to regulation, inhibited by BSH. In terms of biological role, involved in bacillithiol (BSH) biosynthesis. Catalyzes the second step of the pathway, the deacetylation of N-acetylglucosaminylmalate (GlcNAc-Mal) to glucosamine malate (GlcN-Mal). The sequence is that of N-acetyl-alpha-D-glucosaminyl L-malate deacetylase 1 from Bacillus anthracis.